The primary structure comprises 328 residues: Octanoyltransferase, mitochondrial (328 aa).

Positions 108–312 (MKPNPIILTF…EMTKLLGIKT (205 aa)) constitute a BPL/LPL catalytic domain. Residues 162–169 (RGGQVTFH), 241–243 (SVG), and 254–256 (GVA) contribute to the substrate site. C272 acts as the Acyl-thioester intermediate in catalysis.

The protein belongs to the LipB family.

It is found in the mitochondrion. The enzyme catalyses octanoyl-[ACP] + L-lysyl-[protein] = N(6)-octanoyl-L-lysyl-[protein] + holo-[ACP] + H(+). Its pathway is protein modification; protein lipoylation via endogenous pathway; protein N(6)-(lipoyl)lysine from octanoyl-[acyl-carrier-protein]: step 1/2. Catalyzes the transfer of endogenously produced octanoic acid from octanoyl-acyl-carrier-protein onto the lipoyl domains of lipoate-dependent enzymes. Lipoyl-ACP can also act as a substrate although octanoyl-ACP is likely to be the physiological substrate. The protein is Octanoyltransferase, mitochondrial (LIP2) of Saccharomyces cerevisiae (strain ATCC 204508 / S288c) (Baker's yeast).